A 523-amino-acid polypeptide reads, in one-letter code: Synaptotagmin-10 (523 aa).

At 1–55 (MSFRKEDGVSSLCQKALHIITELCFAGQVEWDKCSGIFPADRSGQGGGGTDISVS) the chain is on the vesicular side. Residues 13–35 (CQKALHIITELCFAGQVEWDKCS) are cysteine motif. Residues 56 to 76 (LLAVVVSFCGLALLVVSLFVF) traverse the membrane as a helical segment. Topologically, residues 77 to 523 (WKLCWPCWKS…CSSPRPPSTP (447 aa)) are cytoplasmic. The residue at position 136 (Thr136) is a Phosphothreonine. C2 domains are found at residues 231-352 (TCGK…TVWK) and 363-496 (DLGE…THWH). Ca(2+) is bound by residues Asp262, Asp268, Asp320, Phe321, Asp322, Ser325, Asp328, Asp394, Asp400, Asp454, and Asp456.

Belongs to the synaptotagmin family. In terms of assembly, homodimer; disulfide-linked via the cysteine motif. Can also form heterodimers with SYT3, SYT6, SYT7 and SYT9. Ca(2+) serves as cofactor.

It localises to the cytoplasmic vesicle. The protein localises to the secretory vesicle membrane. Functionally, ca(2+) sensor specifically required for the Ca(2+)-dependent exocytosis of secretory vesicles containing IGF1 in neurons of the olfactory bulb. Exocytosis of IGF1 is required for sensory perception of smell. Not involved in Ca(2+)-dependent synaptic vesicle exocytosis. Acts through Ca(2+) and phospholipid binding to the C2 domain: Ca(2+) induces binding of the C2-domains to phospholipid membranes and to assembled SNARE-complexes; both actions contribute to triggering exocytosis. The polypeptide is Synaptotagmin-10 (Syt10) (Rattus norvegicus (Rat)).